The sequence spans 250 residues: 4-hydroxy-tetrahydrodipicolinate reductase (250 aa).

Residues 10–15, 78–80, and 105–108 contribute to the NAD(+) site; these read GAKGRI, GTT, and APNF. Catalysis depends on histidine 135, which acts as the Proton donor/acceptor. Histidine 136 serves as a coordination point for (S)-2,3,4,5-tetrahydrodipicolinate. Catalysis depends on lysine 139, which acts as the Proton donor. 145-146 is a binding site for (S)-2,3,4,5-tetrahydrodipicolinate; it reads GT.

It belongs to the DapB family.

It localises to the cytoplasm. It catalyses the reaction (S)-2,3,4,5-tetrahydrodipicolinate + NAD(+) + H2O = (2S,4S)-4-hydroxy-2,3,4,5-tetrahydrodipicolinate + NADH + H(+). The catalysed reaction is (S)-2,3,4,5-tetrahydrodipicolinate + NADP(+) + H2O = (2S,4S)-4-hydroxy-2,3,4,5-tetrahydrodipicolinate + NADPH + H(+). Its pathway is amino-acid biosynthesis; L-lysine biosynthesis via DAP pathway; (S)-tetrahydrodipicolinate from L-aspartate: step 4/4. In terms of biological role, catalyzes the conversion of 4-hydroxy-tetrahydrodipicolinate (HTPA) to tetrahydrodipicolinate. This is 4-hydroxy-tetrahydrodipicolinate reductase from Streptomyces coelicolor (strain ATCC BAA-471 / A3(2) / M145).